The primary structure comprises 479 residues: Putative L-cysteine desulfhydrase 2 (479 aa).

The tract at residues 1 to 36 is disordered; that stretch reads MASLQSGGDAAANGVDADVDGAASPPSAKRPRAGAG. Residues 7–36 are compositionally biased toward low complexity; the sequence is GGDAAANGVDADVDGAASPPSAKRPRAGAG. Lys-270 carries the N6-(pyridoxal phosphate)lysine modification.

The protein belongs to the class-V pyridoxal-phosphate-dependent aminotransferase family. Requires pyridoxal 5'-phosphate as cofactor.

The enzyme catalyses L-cysteine + H2O = hydrogen sulfide + pyruvate + NH4(+) + H(+). In terms of biological role, catalyzes the production of hydrogen sulfide (H2S) from cysteine. The sequence is that of Putative L-cysteine desulfhydrase 2 from Oryza sativa subsp. japonica (Rice).